The following is a 131-amino-acid chain: UPF0102 protein YraN (131 aa).

The segment at 1 to 20 is disordered; that stretch reads MATVPTRSGSPRQLTTKQTG.

It belongs to the UPF0102 family.

This is UPF0102 protein YraN from Escherichia coli O139:H28 (strain E24377A / ETEC).